We begin with the raw amino-acid sequence, 270 residues long: 3-methyl-2-oxobutanoate hydroxymethyltransferase (270 aa).

Mg(2+) contacts are provided by D48 and D87. 3-methyl-2-oxobutanoate is bound by residues 48 to 49 (DS), D87, and K117. E119 serves as a coordination point for Mg(2+). Catalysis depends on E186, which acts as the Proton acceptor.

This sequence belongs to the PanB family. In terms of assembly, homodecamer; pentamer of dimers. It depends on Mg(2+) as a cofactor.

Its subcellular location is the cytoplasm. The enzyme catalyses 3-methyl-2-oxobutanoate + (6R)-5,10-methylene-5,6,7,8-tetrahydrofolate + H2O = 2-dehydropantoate + (6S)-5,6,7,8-tetrahydrofolate. It functions in the pathway cofactor biosynthesis; (R)-pantothenate biosynthesis; (R)-pantoate from 3-methyl-2-oxobutanoate: step 1/2. Its function is as follows. Catalyzes the reversible reaction in which hydroxymethyl group from 5,10-methylenetetrahydrofolate is transferred onto alpha-ketoisovalerate to form ketopantoate. The chain is 3-methyl-2-oxobutanoate hydroxymethyltransferase from Synechococcus sp. (strain RCC307).